The primary structure comprises 1147 residues: Probable phospholipid-transporting ATPase IIB (1147 aa).

At 1–146 (MADQIPLYPV…NQKYNVFTFI (146 aa)) the chain is on the cytoplasmic side. Residues 147–168 (PGVLYEQFKFFLNLYFLVISCS) traverse the membrane as a helical segment. At 169 to 173 (QFVPA) the chain is on the extracellular side. Residues 174-196 (LKIGYLYTYWAPLGFVLAVTMTR) form a helical membrane-spanning segment. Over 197–380 (EAIDEFRRFQ…GLLDLELNRL (184 aa)) the chain is Cytoplasmic. The chain crosses the membrane as a helical span at residues 381–401 (TKALFLALVALSIVMVTLQGF). The Extracellular portion of the chain corresponds to 402–409 (VGPWYRNL). The helical transmembrane segment at 410–431 (FRFLLLFSYIIPISLRVNLDMG) threads the bilayer. Residues 432–930 (KAVYGWMMMK…GRNSYKRSAA (499 aa)) lie on the Cytoplasmic side of the membrane. The active-site 4-aspartylphosphate intermediate is the Asp468. 3 residues coordinate ATP: Asp468, Lys469, and Thr470. Residue Asp468 coordinates Mg(2+). Position 470 (Thr470) interacts with Mg(2+). Positions 503–535 (RDSYSQMQSQAGGNNTGSTPLRKAQSSAPKVRK) are disordered. The span at 505–530 (SYSQMQSQAGGNNTGSTPLRKAQSSA) shows a compositional bias: polar residues. Residues Glu591, Phe633, Lys638, Lys657, Arg686, Thr687, Thr766, Gly767, Asp768, Arg848, and Lys854 each coordinate ATP. Asp874 is a binding site for Mg(2+). Positions 877 and 878 each coordinate ATP. Asp878 contacts Mg(2+). The helical transmembrane segment at 931–951 (LGQFVMHRGLIISTMQAVFSS) threads the bilayer. The Extracellular segment spans residues 952–963 (VFYFASVPLYQG). The helical transmembrane segment at 964–982 (FLMVGYATIYTMFPVFSLV) threads the bilayer. The Cytoplasmic segment spans residues 983–1012 (LDQDVKPEMAMLYPELYKDLTKGRSLSFKT). A helical transmembrane segment spans residues 1013–1031 (FLIWVLISIYQGGILMYGA). Residues 1032–1038 (LVLFESE) lie on the Extracellular side of the membrane. Residues 1039 to 1061 (FVHVVAISFTALILTELLMVALT) form a helical membrane-spanning segment. At 1062 to 1067 (VRTWHW) the chain is on the cytoplasmic side. A helical membrane pass occupies residues 1068–1088 (LMVVAEFLSLGCYVSSLAFLN). The Extracellular segment spans residues 1089 to 1105 (EYFGIGRVSFGAFLDVA). The chain crosses the membrane as a helical span at residues 1106–1130 (FITTVTFLWKVSAITVVSCLPLYVL). Residues 1131-1147 (KYLRRKLSPPSYCKLAS) are Cytoplasmic-facing.

This sequence belongs to the cation transport ATPase (P-type) (TC 3.A.3) family. Type IV subfamily. The cofactor is Mg(2+).

Its subcellular location is the golgi apparatus. The protein localises to the trans-Golgi network membrane. The enzyme catalyses ATP + H2O + phospholipidSide 1 = ADP + phosphate + phospholipidSide 2.. This chain is Probable phospholipid-transporting ATPase IIB (ATP9B), found in Homo sapiens (Human).